The sequence spans 919 residues: Transcriptional regulatory protein EDS1 (919 aa).

The tract at residues 1 to 54 (MSHHVPNLYGTPIRDPHERKRNSASMGEVNQSVSSRNCERGSEKGTKQRKKASH) is disordered. Residues 23–36 (SASMGEVNQSVSSR) are compositionally biased toward polar residues. Basic and acidic residues predominate over residues 37-46 (NCERGSEKGT). The zn(2)-C6 fungal-type DNA-binding region spans 56–85 (CDQCRRKRIKCRFDKHTGVCQGCLEVGEKC). The interval 297 to 338 (AGFPNKKLGTDGRSDKWDKNSTWKPVYRSSNPSHPSTEKNVS) is disordered. Residues 304–317 (LGTDGRSDKWDKNS) are compositionally biased toward basic and acidic residues. The span at 318-338 (TWKPVYRSSNPSHPSTEKNVS) shows a compositional bias: polar residues.

It belongs to the EDS1/RGT1 family. As to quaternary structure, binds DNA in a sequence-specific manner.

The protein localises to the nucleus. The chain is Transcriptional regulatory protein EDS1 (EDS1) from Saccharomyces cerevisiae (strain ATCC 204508 / S288c) (Baker's yeast).